A 371-amino-acid polypeptide reads, in one-letter code: Dual-specificity RNA methyltransferase RlmN (371 aa).

The Proton acceptor role is filled by Glu86. The region spanning 105 to 338 is the Radical SAM core domain; it reads RHARYTICVS…CTIRQSKGLD (234 aa). Residues Cys112 and Cys343 are joined by a disulfide bond. The [4Fe-4S] cluster site is built by Cys119, Cys123, and Cys126. S-adenosyl-L-methionine is bound by residues 169–170, Ser201, 224–226, and Asn300; these read GE and SLH. Catalysis depends on Cys343, which acts as the S-methylcysteine intermediate. Residues 348–363 are compositionally biased toward polar residues; sequence QRSQNLSPSNNNTSKP. Positions 348-371 are disordered; the sequence is QRSQNLSPSNNNTSKPSDIKKSES.

It belongs to the radical SAM superfamily. RlmN family. The cofactor is [4Fe-4S] cluster.

Its subcellular location is the cytoplasm. The catalysed reaction is adenosine(2503) in 23S rRNA + 2 reduced [2Fe-2S]-[ferredoxin] + 2 S-adenosyl-L-methionine = 2-methyladenosine(2503) in 23S rRNA + 5'-deoxyadenosine + L-methionine + 2 oxidized [2Fe-2S]-[ferredoxin] + S-adenosyl-L-homocysteine. It catalyses the reaction adenosine(37) in tRNA + 2 reduced [2Fe-2S]-[ferredoxin] + 2 S-adenosyl-L-methionine = 2-methyladenosine(37) in tRNA + 5'-deoxyadenosine + L-methionine + 2 oxidized [2Fe-2S]-[ferredoxin] + S-adenosyl-L-homocysteine. Functionally, specifically methylates position 2 of adenine 2503 in 23S rRNA and position 2 of adenine 37 in tRNAs. m2A2503 modification seems to play a crucial role in the proofreading step occurring at the peptidyl transferase center and thus would serve to optimize ribosomal fidelity. The protein is Dual-specificity RNA methyltransferase RlmN of Campylobacter curvus (strain 525.92).